Reading from the N-terminus, the 407-residue chain is Peptidase T (407 aa).

His-82 provides a ligand contact to Zn(2+). The active site involves Asp-84. Asp-143 serves as a coordination point for Zn(2+). Residue Glu-177 is the Proton acceptor of the active site. The Zn(2+) site is built by Glu-178, Asp-200, and His-382.

The protein belongs to the peptidase M20B family. Requires Zn(2+) as cofactor.

It is found in the cytoplasm. It carries out the reaction Release of the N-terminal residue from a tripeptide.. In terms of biological role, cleaves the N-terminal amino acid of tripeptides. The sequence is that of Peptidase T from Streptococcus uberis (strain ATCC BAA-854 / 0140J).